The sequence spans 212 residues: Octanoyltransferase (212 aa).

The 180-residue stretch at 33 to 212 (GTAPELVWLL…ATFPEVFGAD (180 aa)) folds into the BPL/LPL catalytic domain. Residues 72–79 (RGGQYTYH), 144–146 (AIG), and 157–159 (GIA) contribute to the substrate site. The active-site Acyl-thioester intermediate is the cysteine 175.

The protein belongs to the LipB family.

It is found in the cytoplasm. The catalysed reaction is octanoyl-[ACP] + L-lysyl-[protein] = N(6)-octanoyl-L-lysyl-[protein] + holo-[ACP] + H(+). It functions in the pathway protein modification; protein lipoylation via endogenous pathway; protein N(6)-(lipoyl)lysine from octanoyl-[acyl-carrier-protein]: step 1/2. Functionally, catalyzes the transfer of endogenously produced octanoic acid from octanoyl-acyl-carrier-protein onto the lipoyl domains of lipoate-dependent enzymes. Lipoyl-ACP can also act as a substrate although octanoyl-ACP is likely to be the physiological substrate. The sequence is that of Octanoyltransferase from Paramagnetospirillum magneticum (strain ATCC 700264 / AMB-1) (Magnetospirillum magneticum).